A 295-amino-acid chain; its full sequence is Putative S-adenosyl-L-methionine-dependent methyltransferase Mvan_0910 (295 aa).

S-adenosyl-L-methionine-binding positions include Asp126 and 155–156 (DL).

The protein belongs to the UPF0677 family.

Exhibits S-adenosyl-L-methionine-dependent methyltransferase activity. The polypeptide is Putative S-adenosyl-L-methionine-dependent methyltransferase Mvan_0910 (Mycolicibacterium vanbaalenii (strain DSM 7251 / JCM 13017 / BCRC 16820 / KCTC 9966 / NRRL B-24157 / PYR-1) (Mycobacterium vanbaalenii)).